A 36-amino-acid polypeptide reads, in one-letter code: Dermonecrotic toxin LgSicTox-beta-LOXN1/LOXN7 (36 aa).

Belongs to the arthropod phospholipase D family. Class II subfamily. The cofactor is Mg(2+). Post-translationally, contains 2 disulfide bonds. Expressed by the venom gland.

It is found in the secreted. It catalyses the reaction an N-(acyl)-sphingosylphosphocholine = an N-(acyl)-sphingosyl-1,3-cyclic phosphate + choline. It carries out the reaction an N-(acyl)-sphingosylphosphoethanolamine = an N-(acyl)-sphingosyl-1,3-cyclic phosphate + ethanolamine. The enzyme catalyses a 1-acyl-sn-glycero-3-phosphocholine = a 1-acyl-sn-glycero-2,3-cyclic phosphate + choline. The catalysed reaction is a 1-acyl-sn-glycero-3-phosphoethanolamine = a 1-acyl-sn-glycero-2,3-cyclic phosphate + ethanolamine. Functionally, dermonecrotic toxins cleave the phosphodiester linkage between the phosphate and headgroup of certain phospholipids (sphingolipid and lysolipid substrates), forming an alcohol (often choline) and a cyclic phosphate. This toxin acts on sphingomyelin (SM). It may also act on ceramide phosphoethanolamine (CPE), lysophosphatidylcholine (LPC) and lysophosphatidylethanolamine (LPE), but not on lysophosphatidylserine (LPS), and lysophosphatidylglycerol (LPG). It acts by transphosphatidylation, releasing exclusively cyclic phosphate products as second products. Induces dermonecrosis, hemolysis, increased vascular permeability, edema, inflammatory response, and platelet aggregation. This Loxosceles gaucho (Spider) protein is Dermonecrotic toxin LgSicTox-beta-LOXN1/LOXN7.